We begin with the raw amino-acid sequence, 719 residues long: Polyribonucleotide nucleotidyltransferase (719 aa).

Mg(2+) contacts are provided by Asp495 and Asp501. The KH domain occupies 562–621 (PRRLSFRIDPELIGTVIGPGGRTIKGITERTNTKIDIEDTGIVTVASHDGAAAEEAQKII). Positions 631–699 (GEYFDGKVTR…NRGRINLTLR (69 aa)) constitute an S1 motif domain. The segment at 699–719 (RGVPQDGSDPQPTVILPIGES) is disordered.

The protein belongs to the polyribonucleotide nucleotidyltransferase family. The cofactor is Mg(2+).

Its subcellular location is the cytoplasm. It carries out the reaction RNA(n+1) + phosphate = RNA(n) + a ribonucleoside 5'-diphosphate. In terms of biological role, involved in mRNA degradation. Catalyzes the phosphorolysis of single-stranded polyribonucleotides processively in the 3'- to 5'-direction. The chain is Polyribonucleotide nucleotidyltransferase from Synechococcus sp. (strain RCC307).